Here is a 240-residue protein sequence, read N- to C-terminus: Probable transcriptional regulatory protein YrbC (240 aa).

The protein belongs to the TACO1 family.

The protein resides in the cytoplasm. The protein is Probable transcriptional regulatory protein YrbC (yrbC) of Bacillus subtilis (strain 168).